Consider the following 705-residue polypeptide: Probable iron-sulfur-binding oxidoreductase FadF (705 aa).

A run of 6 helical transmembrane segments spans residues 4 to 24 (FLIA…YLFV), 71 to 91 (IIHV…IDFI), 109 to 129 (AFTF…GWAF), 146 to 166 (AGLV…GNGM), 173 to 193 (HGLS…SGVG), and 199 to 219 (VIFY…LVYV). 2 4Fe-4S ferredoxin-type domains span residues 268 to 298 (QSQL…MLSP) and 360 to 391 (GDVI…VDKI). [4Fe-4S] cluster is bound by residues C277, C280, C283, C287, C371, C374, C377, and C381.

Requires [4Fe-4S] cluster as cofactor.

It is found in the cell membrane. The protein is Probable iron-sulfur-binding oxidoreductase FadF (fadF) of Bacillus subtilis (strain 168).